The sequence spans 212 residues: Octanoyltransferase (212 aa).

One can recognise a BPL/LPL catalytic domain in the interval 34-208 (GQRQDTLILL…AFERQFNARC (175 aa)). Substrate contacts are provided by residues 72–79 (RGGQVTYH), 139–141 (SIG), and 152–154 (GLS). Catalysis depends on Cys170, which acts as the Acyl-thioester intermediate.

It belongs to the LipB family.

The protein localises to the cytoplasm. The enzyme catalyses octanoyl-[ACP] + L-lysyl-[protein] = N(6)-octanoyl-L-lysyl-[protein] + holo-[ACP] + H(+). It functions in the pathway protein modification; protein lipoylation via endogenous pathway; protein N(6)-(lipoyl)lysine from octanoyl-[acyl-carrier-protein]: step 1/2. Its function is as follows. Catalyzes the transfer of endogenously produced octanoic acid from octanoyl-acyl-carrier-protein onto the lipoyl domains of lipoate-dependent enzymes. Lipoyl-ACP can also act as a substrate although octanoyl-ACP is likely to be the physiological substrate. The polypeptide is Octanoyltransferase (Magnetococcus marinus (strain ATCC BAA-1437 / JCM 17883 / MC-1)).